We begin with the raw amino-acid sequence, 270 residues long: MAKVPDLFEDLKNCYSENEDYSSAIDHLSLNQKSFYDASYGSLHETCTDQFVSLRTSETSKMSNFTFKESRVTVSATSSNGKILKKRRLSFSETFTEDDLQSITHDLEETIQPRSAPYTYQSDLRYKLMKLVRQKFVMNDSLNQTIYQDVDKHYLSTTWLNDLQQEVKFDMYAYSSGGDDSKYPVTLKISDSQLFVSAQGEDQPVLLKELPETPKLITGSETDLIFFWKSINSKNYFTSAAYPELFIATKEQSRVHLARGLPSMTDFQIS.

Residues 1–114 constitute a propeptide that is removed on maturation; that stretch reads MAKVPDLFED…HDLEETIQPR (114 aa). Residue Asn64 is glycosylated (N-linked (GlcNAc...) asparagine). N6-acetyllysine is present on Lys85. The segment at 85 to 89 is nuclear localization signal (NLS); it reads KKRRL. Phosphoserine is present on Ser90. Residues Asn139 and Asn143 are each glycosylated (N-linked (GlcNAc...) asparagine).

It belongs to the IL-1 family. Monomer. Interacts with TMED10; the interaction mediates the translocation from the cytoplasm into the ERGIC (endoplasmic reticulum-Golgi intermediate compartment) and thereby secretion. Interacts with IL1R1. Interacts with S100A13; this interaction is the first step in the export of IL1A, followed by direct translocation of this complex across the plasma membrane. Post-translationally, acetylated within its nuclear localization sequence, which impacts subcellular localization. Proteolytic processed by CAPN1 in a calcium-dependent manner. Cleavage from 31 kDa precursor to 18 kDa biologically active molecules. In terms of processing, phosphorylated. Phosphorylation greatly enhances susceptibility to digestion and promotes the conversion of pre-IL1A alpha to the biologically active IL1A.

It localises to the nucleus. The protein resides in the cytoplasm. It is found in the secreted. Cytokine constitutively present intracellularly in nearly all resting non-hematopoietic cells that plays an important role in inflammation and bridges the innate and adaptive immune systems. After binding to its receptor IL1R1 together with its accessory protein IL1RAP, forms the high affinity interleukin-1 receptor complex. Signaling involves the recruitment of adapter molecules such as MYD88, IRAK1 or IRAK4. In turn, mediates the activation of NF-kappa-B and the three MAPK pathways p38, p42/p44 and JNK pathways. Within the cell, acts as an alarmin and cell death results in its liberation in the extracellular space after disruption of the cell membrane to induce inflammation and alert the host to injury or damage. In addition to its role as a danger signal, which occurs when the cytokine is passively released by cell necrosis, directly senses DNA damage and acts as a signal for genotoxic stress without loss of cell integrity. The chain is Interleukin-1 alpha from Mus musculus (Mouse).